Consider the following 414-residue polypeptide: Ciliary microtubule-associated protein 2 (414 aa).

In Mus musculus (Mouse), this protein is Ciliary microtubule-associated protein 2 (Cimap2).